Here is a 341-residue protein sequence, read N- to C-terminus: Putative casein kinase I C03C10.2 (341 aa).

The region spanning 50-326 is the Protein kinase domain; it reads WSIEGVIGNG…KCLYSPKSLL (277 aa). ATP-binding positions include 56 to 64 and Lys-79; that span reads IGNGGYGQI. Residue Asp-173 is the Proton acceptor of the active site.

This sequence belongs to the protein kinase superfamily. CK1 Ser/Thr protein kinase family. Casein kinase I subfamily.

The enzyme catalyses L-seryl-[protein] + ATP = O-phospho-L-seryl-[protein] + ADP + H(+). The catalysed reaction is L-threonyl-[protein] + ATP = O-phospho-L-threonyl-[protein] + ADP + H(+). In Caenorhabditis elegans, this protein is Putative casein kinase I C03C10.2.